The primary structure comprises 442 residues: C4-dicarboxylate transport protein (442 aa).

8 helical membrane-spanning segments follow: residues Gln-19–Pro-39, Leu-55–Met-75, Ala-90–Val-110, Ile-161–Ala-181, Leu-199–Ile-219, Trp-232–Val-252, Ile-318–Gly-338, and Ala-366–Val-386.

The protein belongs to the dicarboxylate/amino acid:cation symporter (DAACS) (TC 2.A.23) family.

The protein resides in the cell inner membrane. Functionally, responsible for the transport of dicarboxylates such as succinate, fumarate, and malate from the periplasm across the membrane. This chain is C4-dicarboxylate transport protein, found in Delftia acidovorans (strain DSM 14801 / SPH-1).